The sequence spans 689 residues: DNA topoisomerase 1 (689 aa).

The Toprim domain occupies 3-113 (DNLVIVESPA…KENRVVFNEI (111 aa)). The Mg(2+) site is built by glutamate 9 and aspartate 82. The Topo IA-type catalytic domain occupies 129-557 (EMNLVDAQQA…FFSSFKQDVE (429 aa)). Residues 163–168 (SAGRVQ) form an interaction with DNA region. Catalysis depends on tyrosine 298, which acts as the O-(5'-phospho-DNA)-tyrosine intermediate. A disordered region spans residues 328–357 (SKRKASGKQGDQDAHEAIRPSSTMRTPDDM). 3 C4-type zinc fingers span residues 577–603 (CEVCGSPMVIKMGRYGKFMACSNFPDC), 617–645 (CPKCNDGDVVERKSKKNRVFYGCSKYPEC), and 658–681 (CPKCNQYLVENKKGKTTQVICSNC).

This sequence belongs to the type IA topoisomerase family. Monomer. The cofactor is Mg(2+).

The enzyme catalyses ATP-independent breakage of single-stranded DNA, followed by passage and rejoining.. In terms of biological role, releases the supercoiling and torsional tension of DNA, which is introduced during the DNA replication and transcription, by transiently cleaving and rejoining one strand of the DNA duplex. Introduces a single-strand break via transesterification at a target site in duplex DNA. The scissile phosphodiester is attacked by the catalytic tyrosine of the enzyme, resulting in the formation of a DNA-(5'-phosphotyrosyl)-enzyme intermediate and the expulsion of a 3'-OH DNA strand. The free DNA strand then undergoes passage around the unbroken strand, thus removing DNA supercoils. Finally, in the religation step, the DNA 3'-OH attacks the covalent intermediate to expel the active-site tyrosine and restore the DNA phosphodiester backbone. The sequence is that of DNA topoisomerase 1 from Staphylococcus aureus.